Reading from the N-terminus, the 496-residue chain is Ammonium transporter 1 member 2 (496 aa).

Helical transmembrane passes span 39 to 59 (LLFS…LCAG), 74 to 94 (VLDA…FAFG), 120 to 140 (FFLF…GSIA), 148 to 168 (YLIY…HWIW), 192 to 212 (FAGS…GALI), 236 to 256 (LVVL…PGSF), 274 to 296 (SAVG…TTLF), 307 to 327 (VIDV…GCSV), 331 to 351 (WAAI…NALA), 360 to 380 (LEAA…TALF), and 412 to 432 (IVVI…LFLV).

It belongs to the ammonia transporter channel (TC 1.A.11.2) family. In terms of tissue distribution, expressed in exodermis, sclerenchyma, endodermis and pericycle cells of primary root tips.

It localises to the membrane. Functionally, ammonium transporter probably involved in ammonium uptake from the soil and ammonium uptake and retrieval in the vascular system. This chain is Ammonium transporter 1 member 2 (AMT1-2), found in Oryza sativa subsp. japonica (Rice).